The sequence spans 78 residues: Small ribosomal subunit protein bS18B (78 aa).

It belongs to the bacterial ribosomal protein bS18 family. Part of the 30S ribosomal subunit. Forms a tight heterodimer with protein bS6.

Binds as a heterodimer with protein bS6 to the central domain of the 16S rRNA, where it helps stabilize the platform of the 30S subunit. The chain is Small ribosomal subunit protein bS18B from Streptomyces griseus subsp. griseus (strain JCM 4626 / CBS 651.72 / NBRC 13350 / KCC S-0626 / ISP 5235).